The following is a 314-amino-acid chain: Cytochrome f (314 aa).

Residues 1-30 form the signal peptide; it reads MATNKFFKSLLFTLTIAISSFGFCVENSSA. The heme site is built by Tyr-31, Cys-51, Cys-54, and His-55. Residues 280–300 form a helical membrane-spanning segment; sequence ILGYLAFCFCLLLTQVLLVLK.

It belongs to the cytochrome f family. The 4 large subunits of the cytochrome b6-f complex are cytochrome b6, subunit IV (17 kDa polypeptide, petD), cytochrome f and the Rieske protein, while the 4 small subunits are PetG, PetL, PetM and PetN. The complex functions as a dimer. Heme is required as a cofactor.

The protein localises to the plastid. The protein resides in the chloroplast thylakoid membrane. Its function is as follows. Component of the cytochrome b6-f complex, which mediates electron transfer between photosystem II (PSII) and photosystem I (PSI), cyclic electron flow around PSI, and state transitions. This Thalassiosira pseudonana (Marine diatom) protein is Cytochrome f.